A 265-amino-acid polypeptide reads, in one-letter code: Aliphatic sulfonates import ATP-binding protein SsuB 1 (265 aa).

Positions 31-255 (FAFKGVEKRF…RRGSAELARL (225 aa)) constitute an ABC transporter domain. 63–70 (GKSGCGKS) contacts ATP.

Belongs to the ABC transporter superfamily. Aliphatic sulfonates importer (TC 3.A.1.17.2) family. The complex is composed of two ATP-binding proteins (SsuB), two transmembrane proteins (SsuC) and a solute-binding protein (SsuA).

It localises to the cell inner membrane. The enzyme catalyses ATP + H2O + aliphatic sulfonate-[sulfonate-binding protein]Side 1 = ADP + phosphate + aliphatic sulfonateSide 2 + [sulfonate-binding protein]Side 1.. Its function is as follows. Part of the ABC transporter complex SsuABC involved in aliphatic sulfonates import. Responsible for energy coupling to the transport system. This chain is Aliphatic sulfonates import ATP-binding protein SsuB 1, found in Mesorhizobium japonicum (strain LMG 29417 / CECT 9101 / MAFF 303099) (Mesorhizobium loti (strain MAFF 303099)).